The chain runs to 229 residues: C-type lectin domain family 1 member B (229 aa).

Residues 1–33 are Cytoplasmic-facing; the sequence is MQDEDGYITLNIKTRKPALISVGSASSSWWRVM. Tyrosine 7 is subject to Phosphotyrosine. Residues 7 to 10 carry the ITAM motif; the sequence is YITL. A helical; Signal-anchor for type II membrane protein transmembrane segment spans residues 34-54; it reads ALILLILCVGMVVGLVALGIW. Over 55-229 the chain is Extracellular; sequence SVMQRNYLQG…AGMTKVDQLP (175 aa). An N-linked (GlcNAc...) asparagine glycan is attached at asparagine 68. An intrachain disulfide couples cysteine 102 to cysteine 113. The region spanning 109-217 is the C-type lectin domain; that stretch reads YGDSCYGFFR…CENKHYLMCE (109 aa). N-linked (GlcNAc...) asparagine glycosylation is found at asparagine 120 and asparagine 134. 2 disulfide bridges follow: cysteine 130–cysteine 216 and cysteine 195–cysteine 208.

In terms of assembly, homodimer. Interacts (via cytoplasmic domain) with RACK1; promotes CLEC1B ubiquitination and proteasome-mediated degradation. Interacts (dimer) with SYK (via SH2 domains). Interacts with PDPN; the interaction is independent of CLEC1B glycosylation and activates CLEC1B. Glycosylated. In terms of processing, phosphorylated on tyrosine residue in response to rhodocytin binding. Expressed preferentially in the liver. Also expressed in immune cells of myeloid origin and on the surface of platelets.

It localises to the membrane. C-type lectin-like receptor that functions as a platelet receptor for the lymphatic endothelial marker, PDPN. After ligand activation, signals via sequential activation of SRC and SYK tyrosine kinases leading to activation of PLCG2. Functionally, (Microbial infection) Acts as a receptor for the platelet-aggregating snake venom protein rhodocytin. Rhodocytin binding leads to tyrosine phosphorylation and this promotes the binding of spleen tyrosine kinase (SYK) and initiation of downstream tyrosine phosphorylation events and activation of PLCG2. Its function is as follows. (Microbial infection) Acts as an attachment factor for Human immunodeficiency virus type 1 (HIV-1) and facilitates its capture by platelets. The sequence is that of C-type lectin domain family 1 member B (CLEC1B) from Homo sapiens (Human).